The following is a 110-amino-acid chain: Protein ripply3 (110 aa).

The WRPW motif signature appears at 18-21 (WRPW). Positions 50-85 (HPVRLFLPRSRMQEYLSRLGSSVLASFPVQATLHFY) are ripply homology domain. Acidic residues predominate over residues 87–99 (DEDSSSEEEEDEE). Positions 87–110 (DEDSSSEEEEDEEHANTRCRLWRP) are disordered.

It belongs to the ripply family.

It is found in the nucleus. Probable transcriptional regulator involved in developmental processes. This is Protein ripply3 (ripply3) from Danio rerio (Zebrafish).